The primary structure comprises 248 residues: ATP synthase subunit a, chloroplastic (248 aa).

The next 5 membrane-spanning stretches (helical) occupy residues 35–55, 94–114, 133–153, 202–222, and 224–244; these read GQVFIVSWLVIAALLTISFLG, VPYIATLFLFILGCNWAGALI, INTTVALSLLTSLAYFYAGLS, VFTLLIPILIPLPVMILGLFA, and SIQALIFSTLSAAYIGEAMEG.

It belongs to the ATPase A chain family. As to quaternary structure, F-type ATPases have 2 components, CF(1) - the catalytic core - and CF(0) - the membrane proton channel. CF(1) has five subunits: alpha(3), beta(3), gamma(1), delta(1), epsilon(1). CF(0) has four main subunits: a, b, b' and c.

Its subcellular location is the plastid. The protein localises to the chloroplast thylakoid membrane. Functionally, key component of the proton channel; it plays a direct role in the translocation of protons across the membrane. The chain is ATP synthase subunit a, chloroplastic from Porphyra purpurea (Red seaweed).